The primary structure comprises 137 residues: Large ribosomal subunit protein uL16 (137 aa).

The protein belongs to the universal ribosomal protein uL16 family. In terms of assembly, part of the 50S ribosomal subunit.

Its function is as follows. Binds 23S rRNA and is also seen to make contacts with the A and possibly P site tRNAs. The chain is Large ribosomal subunit protein uL16 from Rhodopseudomonas palustris (strain BisB18).